Consider the following 499-residue polypeptide: Cytochrome P450 710A2 (499 aa).

A helical transmembrane segment spans residues 5-25 (VSIFASLAPYLVSALLLFFLI). Cys439 contacts heme.

This sequence belongs to the cytochrome P450 family. Heme serves as cofactor. In terms of tissue distribution, expressed in the vascular tissues of roots, shoots, stems and leaves. Expressed in root tips, carpes, siliques and seeds.

Its subcellular location is the membrane. The catalysed reaction is 5-dehydroepisterol + NADPH + O2 + H(+) = ergosta-5,7,22,24(28)-tetraen-3beta-ol + NADP(+) + 2 H2O. It participates in steroid biosynthesis; sterol biosynthesis. Required to form the C-22 double bond in the sterol side chain. Possesses in vitro C-22 desaturase activity toward 24-epi-campesterol and beta-sitosterol and produces brassicasterol and stigmasterol, respectively. No activity with campesterol. The protein is Cytochrome P450 710A2 of Arabidopsis thaliana (Mouse-ear cress).